A 71-amino-acid polypeptide reads, in one-letter code: Small ribosomal subunit protein bS21 (71 aa).

It belongs to the bacterial ribosomal protein bS21 family.

This is Small ribosomal subunit protein bS21 from Shewanella sp. (strain MR-4).